Reading from the N-terminus, the 227-residue chain is Cytochrome c oxidase subunit 2 (227 aa).

The Mitochondrial intermembrane segment spans residues 1 to 14 (MAYPFQLGLQDATS). The chain crosses the membrane as a helical span at residues 15 to 45 (PIMEELLHFHDHTLMIVFLISSLVLYIISLM). The Mitochondrial matrix portion of the chain corresponds to 46 to 59 (LTTKLTHTSTMDAQ). The helical transmembrane segment at 60–87 (EVETVWTILPAIILILIALPSLRILYMM) threads the bilayer. Topologically, residues 88-227 (DEINNPSLTV…YFETWSAVMV (140 aa)) are mitochondrial intermembrane. 6 residues coordinate Cu cation: His161, Cys196, Glu198, Cys200, His204, and Met207. Glu198 contributes to the Mg(2+) binding site. Phosphotyrosine is present on Tyr218.

This sequence belongs to the cytochrome c oxidase subunit 2 family. Component of the cytochrome c oxidase (complex IV, CIV), a multisubunit enzyme composed of 14 subunits. The complex is composed of a catalytic core of 3 subunits MT-CO1, MT-CO2 and MT-CO3, encoded in the mitochondrial DNA, and 11 supernumerary subunits COX4I, COX5A, COX5B, COX6A, COX6B, COX6C, COX7A, COX7B, COX7C, COX8 and NDUFA4, which are encoded in the nuclear genome. The complex exists as a monomer or a dimer and forms supercomplexes (SCs) in the inner mitochondrial membrane with NADH-ubiquinone oxidoreductase (complex I, CI) and ubiquinol-cytochrome c oxidoreductase (cytochrome b-c1 complex, complex III, CIII), resulting in different assemblies (supercomplex SCI(1)III(2)IV(1) and megacomplex MCI(2)III(2)IV(2)). Found in a complex with TMEM177, COA6, COX18, COX20, SCO1 and SCO2. Interacts with TMEM177 in a COX20-dependent manner. Interacts with COX20. Interacts with COX16. Cu cation is required as a cofactor.

The protein resides in the mitochondrion inner membrane. It carries out the reaction 4 Fe(II)-[cytochrome c] + O2 + 8 H(+)(in) = 4 Fe(III)-[cytochrome c] + 2 H2O + 4 H(+)(out). Its function is as follows. Component of the cytochrome c oxidase, the last enzyme in the mitochondrial electron transport chain which drives oxidative phosphorylation. The respiratory chain contains 3 multisubunit complexes succinate dehydrogenase (complex II, CII), ubiquinol-cytochrome c oxidoreductase (cytochrome b-c1 complex, complex III, CIII) and cytochrome c oxidase (complex IV, CIV), that cooperate to transfer electrons derived from NADH and succinate to molecular oxygen, creating an electrochemical gradient over the inner membrane that drives transmembrane transport and the ATP synthase. Cytochrome c oxidase is the component of the respiratory chain that catalyzes the reduction of oxygen to water. Electrons originating from reduced cytochrome c in the intermembrane space (IMS) are transferred via the dinuclear copper A center (CU(A)) of subunit 2 and heme A of subunit 1 to the active site in subunit 1, a binuclear center (BNC) formed by heme A3 and copper B (CU(B)). The BNC reduces molecular oxygen to 2 water molecules using 4 electrons from cytochrome c in the IMS and 4 protons from the mitochondrial matrix. This is Cytochrome c oxidase subunit 2 (MT-CO2) from Lycalopex culpaeus (Culpeo fox).